We begin with the raw amino-acid sequence, 235 residues long: RAD9, HUS1, RAD1-interacting nuclear orphan protein 1 (235 aa).

Position 50 is a phosphoserine (Ser-50). Residues 54–60 (SWVSPQF) carry the RAD1-binding motif motif. Disordered stretches follow at residues 75–106 (HRDQ…SETL), 111–130 (RVQP…VPLF), and 149–198 (VFAP…LVKD). The segment covering 96–106 (ESPQSSSSETL) has biased composition (polar residues). The short motif at 123-130 (RRPLVPLF) is the D-box element. A compositionally biased stretch (basic and acidic residues) spans 161-173 (SVRDDPISPDQKE). The KEN box signature appears at 171-175 (QKENS).

As to quaternary structure, interacts (when phosphorylated by PLK1) with POLQ; promoting POLQ recruitment to DNA damage sites. Interacts with RAD1; interaction is direct and promotes association with the 9-1-1 (RAD9-RAD1-HUS1) complex. Interacts with RAD18. Interacts with TOPBP1. Interacts with UBE2N. In terms of processing, phosphorylated at Ser-50 by PLK1, promoting interaction with polymerase theta (POLQ). Post-translationally, ubiquitinated and degraded by the APC/C complex upon mitotic exit.

It is found in the nucleus. The protein localises to the chromosome. In terms of biological role, involved in microhomology-mediated end-joining (MMEJ) DNA repair by promoting recruitment of polymerase theta (POLQ) to DNA damage sites during mitosis. MMEJ is an alternative non-homologous end-joining (NHEJ) machinery that takes place during mitosis to repair double-strand breaks in DNA that originate in S-phase. Accumulates in M-phase; following phosphorylation by PLK1, interacts with POLQ, enabling its recruitment to double-strand breaks for subsequent repair. Also involved in the DNA damage response (DDR) signaling in response to genotoxic stresses such as ionizing radiation (IR) during the S phase. Recruited to sites of DNA damage through interaction with the 9-1-1 cell-cycle checkpoint response complex and TOPBP1 in a ATR-dependent manner. Required for the progression of the G1 to S phase transition. Plays a role in the stimulation of CHEK1 phosphorylation. This chain is RAD9, HUS1, RAD1-interacting nuclear orphan protein 1 (Rhno1), found in Mus musculus (Mouse).